Reading from the N-terminus, the 252-residue chain is tRNA1(Val) (adenine(37)-N6)-methyltransferase (252 aa).

It belongs to the methyltransferase superfamily. tRNA (adenine-N(6)-)-methyltransferase family.

It localises to the cytoplasm. The enzyme catalyses adenosine(37) in tRNA1(Val) + S-adenosyl-L-methionine = N(6)-methyladenosine(37) in tRNA1(Val) + S-adenosyl-L-homocysteine + H(+). Its function is as follows. Specifically methylates the adenine in position 37 of tRNA(1)(Val) (anticodon cmo5UAC). The chain is tRNA1(Val) (adenine(37)-N6)-methyltransferase from Proteus mirabilis (strain HI4320).